The sequence spans 205 residues: Endoplasmic reticulum membrane protein complex subunit 10 (205 aa).

Positions 1 to 17 (MLVRLLRVILLASMVFC) are cleaved as a signal peptide. Topologically, residues 18–172 (ADILQLSYSD…VKEVSWFQKN (155 aa)) are lumenal. Asn-47 is a glycosylation site (N-linked (GlcNAc...) asparagine). A helical transmembrane segment spans residues 173-190 (WKMLLLGLLIYNFVAGSA). Topologically, residues 191 to 205 (KKQQQGGAGADQKTE) are cytoplasmic.

Component of the ER membrane protein complex (EMC).

The protein localises to the endoplasmic reticulum membrane. Functionally, part of the endoplasmic reticulum membrane protein complex (EMC) that enables the energy-independent insertion into endoplasmic reticulum membranes of newly synthesized membrane proteins. Preferentially accommodates proteins with transmembrane domains that are weakly hydrophobic or contain destabilizing features such as charged and aromatic residues. Involved in the cotranslational insertion of multi-pass membrane proteins in which stop-transfer membrane-anchor sequences become ER membrane spanning helices. It is also required for the post-translational insertion of tail-anchored/TA proteins in endoplasmic reticulum membranes. By mediating the proper cotranslational insertion of N-terminal transmembrane domains in an N-exo topology, with translocated N-terminus in the lumen of the ER, controls the topology of multi-pass membrane proteins. This is Endoplasmic reticulum membrane protein complex subunit 10 from Saccharomyces cerevisiae (strain ATCC 204508 / S288c) (Baker's yeast).